The sequence spans 645 residues: Beta-galactosidase (645 aa).

Arginine 102 contributes to the substrate binding site. Cysteine 106 provides a ligand contact to Zn(2+). Residue asparagine 140 coordinates substrate. The active-site Proton donor is glutamate 141. Zn(2+) is bound by residues cysteine 150, cysteine 152, and cysteine 155. Residue glutamate 312 is the Nucleophile of the active site. Residues tryptophan 320 and 360-363 (EQMH) each bind substrate.

The protein belongs to the glycosyl hydrolase 42 family. Homotrimer.

It catalyses the reaction Hydrolysis of terminal non-reducing beta-D-galactose residues in beta-D-galactosides.. Its activity is regulated as follows. Inhibited by Cu(2+) and Fe(2+), and moderately activated by divalent cations such as Co(2+), Mn(2+) and Zn(2+). Considerably activated by dithiothreitol, beta-mercaptoethanol and cysteine. The polypeptide is Beta-galactosidase (Thermus thermophilus).